We begin with the raw amino-acid sequence, 544 residues long: E3 ubiquitin-protein ligase makorin-3 (544 aa).

2 disordered regions span residues 1-46 (MEES…VSSA) and 117-144 (DLSGRRRSRGGQDAQPRASADRGPKMAT). Low complexity-rich tracts occupy residues 9–19 (EAHAAAGAEAG) and 36–46 (AAGASAGVSSA). 2 consecutive C3H1-type zinc fingers follow at residues 92–119 (WTKQILCRYYLHGQCKEGDNCRYSHDLS) and 274–301 (PMPLPLCRYAARGQCLRGDRCAYPHGEI). Residues 302–329 (CDMCGQQALHPWDAAQQEAHRRACVEAH) are makorin-type Cys-His. Residues 347-401 (CGICMEVVYEKADPSDRRFGILFSCNHTYCLRCIRRWRSATQFENRISKSCPQCR) form an RING-type zinc finger. Residues 430–459 (GMSQKACRYFAGGLGHCPFGEFCFYKHEYP) form a C3H1-type 3 zinc finger.

As to expression, mainly expressed in mouse brain and reproductive system including testis and ovary. Ubiquitously detected at low levels throughout the entire embryo, but expression is highest in the ventricular layers of the brain.

It is found in the nucleus. The enzyme catalyses S-ubiquitinyl-[E2 ubiquitin-conjugating enzyme]-L-cysteine + [acceptor protein]-L-lysine = [E2 ubiquitin-conjugating enzyme]-L-cysteine + N(6)-ubiquitinyl-[acceptor protein]-L-lysine.. It functions in the pathway protein modification; protein ubiquitination. Functionally, E3 ubiquitin ligase catalyzing the covalent attachment of ubiquitin moieties onto substrate proteins. Acts as a key developmental timer that helps ensure puberty begins at the appropriate age, by inhibiting premature activation of the reproductive hormone cascade. Epigenetically regulates GNRH1 transcription by disrupting the binding of methyl-DNA binding protein 3/MBD3 to the promoter of GNRH1. Mechanistically, mediates the non-proteolytic ubiquitination of MBD3 at multiple sites with 'Lys27' ubiquitin linkages and thereby regulates the methylation status of the genome, including GNRH1 promoter. Modulates the stability and translation of GNRH1 mRNA by mediating the non-proteolytic ubiquitination of PABP family members PABPC1, PABPC3 and PABPC4 at multiple sites. Also participates in the maintenance of genomic and epigenomic stability by regulating the abundance of APEX2 via 'Lys-48'-linked ubiquitination. In Mus musculus (Mouse), this protein is E3 ubiquitin-protein ligase makorin-3 (Mkrn3).